Here is a 153-residue protein sequence, read N- to C-terminus: SsrA-binding protein (153 aa).

It belongs to the SmpB family.

The protein resides in the cytoplasm. Required for rescue of stalled ribosomes mediated by trans-translation. Binds to transfer-messenger RNA (tmRNA), required for stable association of tmRNA with ribosomes. tmRNA and SmpB together mimic tRNA shape, replacing the anticodon stem-loop with SmpB. tmRNA is encoded by the ssrA gene; the 2 termini fold to resemble tRNA(Ala) and it encodes a 'tag peptide', a short internal open reading frame. During trans-translation Ala-aminoacylated tmRNA acts like a tRNA, entering the A-site of stalled ribosomes, displacing the stalled mRNA. The ribosome then switches to translate the ORF on the tmRNA; the nascent peptide is terminated with the 'tag peptide' encoded by the tmRNA and targeted for degradation. The ribosome is freed to recommence translation, which seems to be the essential function of trans-translation. The polypeptide is SsrA-binding protein (Paramagnetospirillum magneticum (strain ATCC 700264 / AMB-1) (Magnetospirillum magneticum)).